A 550-amino-acid chain; its full sequence is Glucose-6-phosphate isomerase 1 (550 aa).

Catalysis depends on Glu358, which acts as the Proton donor. Residues His389 and Lys513 contribute to the active site.

Belongs to the GPI family.

The protein localises to the cytoplasm. It carries out the reaction alpha-D-glucose 6-phosphate = beta-D-fructose 6-phosphate. The protein operates within carbohydrate biosynthesis; gluconeogenesis. It participates in carbohydrate degradation; glycolysis; D-glyceraldehyde 3-phosphate and glycerone phosphate from D-glucose: step 2/4. Functionally, catalyzes the reversible isomerization of glucose-6-phosphate to fructose-6-phosphate. The sequence is that of Glucose-6-phosphate isomerase 1 from Streptomyces coelicolor (strain ATCC BAA-471 / A3(2) / M145).